Reading from the N-terminus, the 213-residue chain is MKAFTKITAIVAPLDRSNVDTDAIIPKQFLKSIKRSGFGPNAFDEWRYLDHGEPGMDNGKRPLNPDFSLNQPRYQGAQILLTRKNFGCGSSREHAPWALDDYGFRAIIAPSFADIFFNNCYKNGLLPIVLTEEQVDRLFKEVEANEGYRLSIDLAEQTLTTPGGETFTFDITEHRKHCLLNGLDEIGLTLQHADKIKAFEEKRRQSQPWLFNG.

It belongs to the LeuD family. LeuD type 1 subfamily. In terms of assembly, heterodimer of LeuC and LeuD.

It carries out the reaction (2R,3S)-3-isopropylmalate = (2S)-2-isopropylmalate. It participates in amino-acid biosynthesis; L-leucine biosynthesis; L-leucine from 3-methyl-2-oxobutanoate: step 2/4. Catalyzes the isomerization between 2-isopropylmalate and 3-isopropylmalate, via the formation of 2-isopropylmaleate. This is 3-isopropylmalate dehydratase small subunit from Neisseria gonorrhoeae (strain ATCC 700825 / FA 1090).